The primary structure comprises 75 residues: Beta-defensin 42 (75 aa).

The N-terminal stretch at 1–21 (MNLRLSCLLFILVTSLPAGRC) is a signal peptide. 3 disulfide bridges follow: cysteine 33–cysteine 60, cysteine 40–cysteine 54, and cysteine 44–cysteine 61.

The protein belongs to the beta-defensin family. Epididymis-specific, with highest levels in the initial segment and distal caput.

Its subcellular location is the secreted. Its function is as follows. Has bactericidal activity. May play a role in the antimicrobial protection of sperm and urogenital tract epithelia. In Mus musculus (Mouse), this protein is Beta-defensin 42.